The chain runs to 346 residues: MSDRNPLIDADRRVDEDNTLRPQTLDDFVGQAAARANLKVFIEAAKVRGEALDHVLFVGPPGLGKTTLAQIMAKELGVNFRSTSGPVIAKAGDLAALLTNLEERDVLFIDEIHRLSPAVEEILYPAMEDFQLDLIIGEGPAARSVKIDLAKFTLVAATTRLGLLTTPLRDRFGIPTRLNFYTVEELEYIVRRGARIMQMGISPDGALEVARRSRGTPRIAGRLLRRVRDFALVAGADVIDRKIADEALSRLEVDNRGLDQLDRRYLNIIARNFGGGPVGIETIAAGLSEPRDAIEDIIEPYLIQQGFLQRTPRGRVLTAVAWQHLGLPAPAEIIQQSQYGLFMEDE.

Residues 1–181 are large ATPase domain (RuvB-L); the sequence is MSDRNPLIDA…FGIPTRLNFY (181 aa). ATP-binding positions include leucine 20, arginine 21, glycine 62, lysine 65, threonine 66, threonine 67, 128 to 130, arginine 171, tyrosine 181, and arginine 218; that span reads EDF. Threonine 66 is a binding site for Mg(2+). The interval 182–252 is small ATPAse domain (RuvB-S); sequence TVEELEYIVR…IADEALSRLE (71 aa). The interval 255–346 is head domain (RuvB-H); sequence NRGLDQLDRR…SQYGLFMEDE (92 aa). Positions 291, 310, and 315 each coordinate DNA.

The protein belongs to the RuvB family. As to quaternary structure, homohexamer. Forms an RuvA(8)-RuvB(12)-Holliday junction (HJ) complex. HJ DNA is sandwiched between 2 RuvA tetramers; dsDNA enters through RuvA and exits via RuvB. An RuvB hexamer assembles on each DNA strand where it exits the tetramer. Each RuvB hexamer is contacted by two RuvA subunits (via domain III) on 2 adjacent RuvB subunits; this complex drives branch migration. In the full resolvosome a probable DNA-RuvA(4)-RuvB(12)-RuvC(2) complex forms which resolves the HJ.

The protein localises to the cytoplasm. The catalysed reaction is ATP + H2O = ADP + phosphate + H(+). Functionally, the RuvA-RuvB-RuvC complex processes Holliday junction (HJ) DNA during genetic recombination and DNA repair, while the RuvA-RuvB complex plays an important role in the rescue of blocked DNA replication forks via replication fork reversal (RFR). RuvA specifically binds to HJ cruciform DNA, conferring on it an open structure. The RuvB hexamer acts as an ATP-dependent pump, pulling dsDNA into and through the RuvAB complex. RuvB forms 2 homohexamers on either side of HJ DNA bound by 1 or 2 RuvA tetramers; 4 subunits per hexamer contact DNA at a time. Coordinated motions by a converter formed by DNA-disengaged RuvB subunits stimulates ATP hydrolysis and nucleotide exchange. Immobilization of the converter enables RuvB to convert the ATP-contained energy into a lever motion, pulling 2 nucleotides of DNA out of the RuvA tetramer per ATP hydrolyzed, thus driving DNA branch migration. The RuvB motors rotate together with the DNA substrate, which together with the progressing nucleotide cycle form the mechanistic basis for DNA recombination by continuous HJ branch migration. Branch migration allows RuvC to scan DNA until it finds its consensus sequence, where it cleaves and resolves cruciform DNA. The chain is Holliday junction branch migration complex subunit RuvB from Brucella anthropi (strain ATCC 49188 / DSM 6882 / CCUG 24695 / JCM 21032 / LMG 3331 / NBRC 15819 / NCTC 12168 / Alc 37) (Ochrobactrum anthropi).